We begin with the raw amino-acid sequence, 421 residues long: Divalent metal cation transporter MntH (421 aa).

Transmembrane regions (helical) follow at residues 27–47, 51–71, 100–120, 128–148, 160–180, 201–221, 248–268, 289–309, 337–357, 358–378, and 396–416; these read LGPAFIVSVAYVDPGNFATNI, SLFDYHLIWVILWSNVIAIFL, WFLWITAELAAMATDLAEFLG, LFHIPMTYAAFLTGVVTFAIV, GIIFGLVAVISLAYAFELFIA, AMLIAVGILGATVMPHVIYLH, ILVAMNTAFIINAAMLIVSAA, PLLGVFSSWAFGIALLASGFS, LVTMVPAITIIALGIDPLKSL, IVSQVVLSFELPMAIIPLLLI, and IMGVLVASFVMILNGLLLYLT.

It belongs to the NRAMP family.

The protein localises to the cell membrane. H(+)-stimulated, divalent metal cation uptake system. This chain is Divalent metal cation transporter MntH, found in Caldanaerobacter subterraneus subsp. tengcongensis (strain DSM 15242 / JCM 11007 / NBRC 100824 / MB4) (Thermoanaerobacter tengcongensis).